We begin with the raw amino-acid sequence, 204 residues long: Small ribosomal subunit protein uS4 (204 aa).

An S4 RNA-binding domain is found at 92-153; that stretch reads RRLDALVLRS…RSKEKTLFTI (62 aa).

It belongs to the universal ribosomal protein uS4 family. In terms of assembly, part of the 30S ribosomal subunit. Contacts protein S5. The interaction surface between S4 and S5 is involved in control of translational fidelity.

One of the primary rRNA binding proteins, it binds directly to 16S rRNA where it nucleates assembly of the body of the 30S subunit. In terms of biological role, with S5 and S12 plays an important role in translational accuracy. The chain is Small ribosomal subunit protein uS4 from Streptomyces coelicolor (strain ATCC BAA-471 / A3(2) / M145).